Reading from the N-terminus, the 156-residue chain is CASP-like protein 5C1 (156 aa).

At 1–21 (MENRERAGAGAVGSAGSLGLR) the chain is on the cytoplasmic side. A helical membrane pass occupies residues 22–42 (VGQAVFSSASLLFMSVGVEFF). Over 43-46 (SYTA) the chain is Extracellular. A helical membrane pass occupies residues 47–67 (FCFLVTIMGLVIPWSCTLAMI). The Cytoplasmic portion of the chain corresponds to 68 to 81 (DVYSILVGCPLRVP). A helical membrane pass occupies residues 82–102 (GVMVIVVIGDWVLAILSLAAA). Residues 103-132 (SSSAAVIDLLLQFHGSHCSPRFCGRYQLSA) are Extracellular-facing. A helical transmembrane segment spans residues 133–153 (MMAFLSWFLTAASSLFNLWFI). Residues 154 to 156 (ASR) are Cytoplasmic-facing.

It belongs to the Casparian strip membrane proteins (CASP) family. As to quaternary structure, homodimer and heterodimers.

It localises to the cell membrane. The protein is CASP-like protein 5C1 of Oryza sativa subsp. japonica (Rice).